The primary structure comprises 466 residues: ATP synthase subunit beta (466 aa).

156–163 (GGAGVGKT) is an ATP binding site.

Belongs to the ATPase alpha/beta chains family. As to quaternary structure, F-type ATPases have 2 components, CF(1) - the catalytic core - and CF(0) - the membrane proton channel. CF(1) has five subunits: alpha(3), beta(3), gamma(1), delta(1), epsilon(1). CF(0) has three main subunits: a(1), b(2) and c(9-12). The alpha and beta chains form an alternating ring which encloses part of the gamma chain. CF(1) is attached to CF(0) by a central stalk formed by the gamma and epsilon chains, while a peripheral stalk is formed by the delta and b chains.

It is found in the cell inner membrane. The enzyme catalyses ATP + H2O + 4 H(+)(in) = ADP + phosphate + 5 H(+)(out). Functionally, produces ATP from ADP in the presence of a proton gradient across the membrane. The catalytic sites are hosted primarily by the beta subunits. The protein is ATP synthase subunit beta of Polynucleobacter necessarius subsp. necessarius (strain STIR1).